The sequence spans 338 residues: MLTERQLLILQTIIDDFIGSAQPVGSRTLAKKDEITYSSATIRNEMADLEELGFIEKTHSSSGRVPSEKGYRFYVDHLLAPQNLPNDEIVQIKDLFVERIFEAEKIAQQSAQILSELTNYTAIVLGPKLSTNKLKNVQIVPLDRQTAVAIIVTDTGHVQSKTITVPESVDLSDLEKMVNILNEKLSGVPMSELHNKIFKEIVTVLRGYVHNYDSAIKMLDGTFQVPLSEKIYFGGKANMLSQPEFHDIHKVRSLLTMIDNEAEFYDILRHKQVGIQVKIGRENSATAMEDCSLISATYSIGEEQLGTIAILGPTRMQYSRVISLLQLFTRQFTDGLKK.

This sequence belongs to the HrcA family.

Functionally, negative regulator of class I heat shock genes (grpE-dnaK-dnaJ and groELS operons). Prevents heat-shock induction of these operons. The sequence is that of Heat-inducible transcription repressor HrcA from Bacillus anthracis (strain A0248).